The primary structure comprises 198 residues: Recombination protein RecR (198 aa).

The C4-type zinc finger occupies 57–72 (CSICGNLTDDDPCHIC). The Toprim domain maps to 80–175 (TTILVVEDAK…KVTRLARGLA (96 aa)).

The protein belongs to the RecR family.

In terms of biological role, may play a role in DNA repair. It seems to be involved in an RecBC-independent recombinational process of DNA repair. It may act with RecF and RecO. The chain is Recombination protein RecR from Streptococcus pyogenes serotype M1.